The chain runs to 820 residues: Chitinase A (820 aa).

A signal peptide spans 1–21; that stretch reads MKLNKITSYIGFALLSGGALA. The 431-residue stretch at 158-588 folds into the GH18 domain; that stretch reads RVTGAYFVEW…NAMYDGLTAG (431 aa). The active-site Proton donor is the glutamate 313.

It belongs to the glycosyl hydrolase 18 family. Chitinase class II subfamily.

It catalyses the reaction Random endo-hydrolysis of N-acetyl-beta-D-glucosaminide (1-&gt;4)-beta-linkages in chitin and chitodextrins.. Stimulated by magnesium ions; inhibited by N-bromosuccinimide and 2-hydroxy-5-nitrobenzyl bromide. The sequence is that of Chitinase A (chiA) from Pseudoalteromonas piscicida.